Here is a 53-residue protein sequence, read N- to C-terminus: uncharacterized protein (53 aa).

Residues 18-38 traverse the membrane as a helical segment; that stretch reads FLFFIFYFLFFFIFFTVFGNL.

It is found in the membrane. This is an uncharacterized protein from Dictyostelium discoideum (Social amoeba).